The chain runs to 689 residues: Methionine--tRNA ligase (689 aa).

A 'HIGH' region motif is present at residues 16 to 26; sequence PYANAGLHLGH. Zn(2+) contacts are provided by C147, C150, C160, and C163. Positions 342 to 346 match the 'KMSKS' region motif; sequence KMSKS. ATP is bound at residue K345. In terms of domain architecture, tRNA-binding spans 585-689; that stretch reads DFAKVDLRVG…AGVKPGMRVG (105 aa).

Belongs to the class-I aminoacyl-tRNA synthetase family. MetG type 1 subfamily. In terms of assembly, homodimer. The cofactor is Zn(2+).

The protein resides in the cytoplasm. It catalyses the reaction tRNA(Met) + L-methionine + ATP = L-methionyl-tRNA(Met) + AMP + diphosphate. Functionally, is required not only for elongation of protein synthesis but also for the initiation of all mRNA translation through initiator tRNA(fMet) aminoacylation. The sequence is that of Methionine--tRNA ligase from Chromobacterium violaceum (strain ATCC 12472 / DSM 30191 / JCM 1249 / CCUG 213 / NBRC 12614 / NCIMB 9131 / NCTC 9757 / MK).